The chain runs to 146 residues: Hemoglobin A/D subunit beta (146 aa).

Residues 2 to 146 (HWTSEEKQYI…VAHALALGYH (145 aa)) enclose the Globin domain. Histidine 63 and histidine 92 together coordinate heme b.

It belongs to the globin family. In terms of assembly, hemoglobins A and D are heterotetramers of alpha-1, alpha-2 and two identical beta chains. As to expression, red blood cells.

Functionally, involved in oxygen transport from the lung to the various peripheral tissues. This is Hemoglobin A/D subunit beta from Aldabrachelys gigantea (Aldabra giant tortoise).